The sequence spans 269 residues: Peptide deformylase 1A, chloroplastic/mitochondrial (269 aa).

The transit peptide at 1–60 directs the protein to the chloroplast and mitochondrion; sequence MGLHRDEATAMETLFRVSLRLLPVSAAVTCRSIRFPVSRPGSSHLLNRKLYNLPTSSSSS. Substrate is bound by residues 123 to 126 and G187; that span reads PGVG. C188 serves as a coordination point for Zn(2+). Residues 191–196 are dimerization; that stretch reads VDGFRA. H230 serves as a coordination point for Zn(2+). The active site involves E231. Residue H234 participates in Zn(2+) binding. The interval 236–254 is dimerization; it reads DGNLYVDKMVPRTFRTVDN.

Belongs to the polypeptide deformylase family. In terms of assembly, homodimer. Requires Zn(2+) as cofactor. In terms of tissue distribution, expressed in roots, leaves, flowers and siliques.

The protein localises to the plastid. The protein resides in the chloroplast stroma. It is found in the mitochondrion. The enzyme catalyses N-terminal N-formyl-L-methionyl-[peptide] + H2O = N-terminal L-methionyl-[peptide] + formate. With respect to regulation, inhibited by actinonin. Its function is as follows. Removes the formyl group from the N-terminal Met of newly synthesized proteins. This Arabidopsis thaliana (Mouse-ear cress) protein is Peptide deformylase 1A, chloroplastic/mitochondrial (PDF1A).